Consider the following 338-residue polypeptide: Lipoate-protein ligase A (338 aa).

Positions 29 to 216 constitute a BPL/LPL catalytic domain; the sequence is PATQRVLFLW…AFFAHYGERI (188 aa). Residues R71, 76–79, and K134 each bind ATP; that span reads GAVF. K134 is a (R)-lipoate binding site.

This sequence belongs to the LplA family. In terms of assembly, monomer.

It is found in the cytoplasm. The catalysed reaction is L-lysyl-[lipoyl-carrier protein] + (R)-lipoate + ATP = N(6)-[(R)-lipoyl]-L-lysyl-[lipoyl-carrier protein] + AMP + diphosphate + H(+). It functions in the pathway protein modification; protein lipoylation via exogenous pathway; protein N(6)-(lipoyl)lysine from lipoate: step 1/2. It participates in protein modification; protein lipoylation via exogenous pathway; protein N(6)-(lipoyl)lysine from lipoate: step 2/2. Its function is as follows. Catalyzes both the ATP-dependent activation of exogenously supplied lipoate to lipoyl-AMP and the transfer of the activated lipoyl onto the lipoyl domains of lipoate-dependent enzymes. This chain is Lipoate-protein ligase A, found in Salmonella paratyphi A (strain ATCC 9150 / SARB42).